The chain runs to 270 residues: NAD kinase (270 aa).

Aspartate 45 (proton acceptor) is an active-site residue. NAD(+) contacts are provided by residues 45–46 (DG), 121–122 (NE), lysine 147, aspartate 149, 160–165 (TAYSKS), and alanine 184.

This sequence belongs to the NAD kinase family. It depends on a divalent metal cation as a cofactor.

Its subcellular location is the cytoplasm. The enzyme catalyses NAD(+) + ATP = ADP + NADP(+) + H(+). In terms of biological role, involved in the regulation of the intracellular balance of NAD and NADP, and is a key enzyme in the biosynthesis of NADP. Catalyzes specifically the phosphorylation on 2'-hydroxyl of the adenosine moiety of NAD to yield NADP. The protein is NAD kinase of Lactobacillus johnsonii (strain CNCM I-12250 / La1 / NCC 533).